The sequence spans 100 residues: MAKKSLIQREKKREKLKQKYQAFRKYLKEEMSQTLSIDKKWEIQKQLQSLPRNSTPTRIHRRCFLTGRPRANYRDFNLSRHILREMIHACLLPGVTKASW.

It belongs to the universal ribosomal protein uS14 family. In terms of assembly, part of the 30S ribosomal subunit.

The protein resides in the plastid. Its subcellular location is the chloroplast. In terms of biological role, binds 16S rRNA, required for the assembly of 30S particles. This Anthoceros angustus (Hornwort) protein is Small ribosomal subunit protein uS14c.